A 367-amino-acid polypeptide reads, in one-letter code: F-box protein At3g56470 (367 aa).

Residues 1-18 (MVTRRRSKKKKKTKRKKQ) show a composition bias toward basic residues. Residues 1 to 24 (MVTRRRSKKKKKTKRKKQSSKEKE) form a disordered region. Residues 26 to 81 (YQTFINLPCDLLQLVISRLPLKDNIRASAVCKTWHEACVSLRVIHTSPWLIYFSKT) enclose the F-box domain.

This Arabidopsis thaliana (Mouse-ear cress) protein is F-box protein At3g56470.